The chain runs to 140 residues: Nucleoside diphosphate kinase (140 aa).

Positions 11, 59, 87, 93, 104, and 114 each coordinate ATP. The Pros-phosphohistidine intermediate role is filled by histidine 117.

It belongs to the NDK family. As to quaternary structure, homotetramer. Mg(2+) serves as cofactor.

It localises to the cytoplasm. It catalyses the reaction a 2'-deoxyribonucleoside 5'-diphosphate + ATP = a 2'-deoxyribonucleoside 5'-triphosphate + ADP. The catalysed reaction is a ribonucleoside 5'-diphosphate + ATP = a ribonucleoside 5'-triphosphate + ADP. In terms of biological role, major role in the synthesis of nucleoside triphosphates other than ATP. The ATP gamma phosphate is transferred to the NDP beta phosphate via a ping-pong mechanism, using a phosphorylated active-site intermediate. This Rhodovulum sulfidophilum (Rhodobacter sulfidophilus) protein is Nucleoside diphosphate kinase.